A 166-amino-acid chain; its full sequence is Interleukin-3 (166 aa).

The first 27 residues, 1–27 (MVLASSTTSILCMLLPLLMLFHQGLQI), serve as a signal peptide directing secretion. 2 disulfide bridges follow: C43–C106 and C105–C166. Residues N60 and N70 are each glycosylated (N-linked (GlcNAc...) asparagine). Positions 145 to 166 (SVSRPPQPTSSSDNFRPMTVEC) are disordered.

The protein belongs to the IL-3 family. As to quaternary structure, monomer. Activated T-cells, mast cells, natural killer cells.

The protein resides in the secreted. Cytokine secreted predominantly by activated T-lymphocytes as well as mast cells and osteoblastic cells that controls the production and differentiation of hematopoietic progenitor cells into lineage-restricted cells. Also stimulates mature basophils, eosinophils, and monocytes to become functionally activated. In addition, plays an important role in neural cell proliferation and survival. Participates as well in bone homeostasis and inhibits osteoclast differentiation by preventing NF-kappa-B nuclear translocation and activation. Mechanistically, exerts its biological effects through a receptor composed of IL3RA subunit and a signal transducing subunit IL3RB. Receptor stimulation results in the rapid activation of JAK2 kinase activity leading to STAT5-mediated transcriptional program. Alternatively, contributes to cell survival under oxidative stress in non-hematopoietic systems by activating pathways mediated by PI3K/AKT and ERK. The polypeptide is Interleukin-3 (Il3) (Rattus norvegicus (Rat)).